The following is a 476-amino-acid chain: Serine/threonine-protein kinase sax-1 (476 aa).

Positions 87 to 381 constitute a Protein kinase domain; it reads FESLKVIGRG…LDEIKQCPFV (295 aa). ATP-binding positions include 93–101 and Lys116; that span reads IGRGAFGEV. Asp210 acts as the Proton acceptor in catalysis. The AGC-kinase C-terminal domain maps to 382–452; sequence KRIDWNHIRE…KRFDGLTQKM (71 aa).

It belongs to the protein kinase superfamily. AGC Ser/Thr protein kinase family. The cofactor is Mg(2+). In terms of tissue distribution, widely expressed in embryonic and larval neurons that contribute axons to the nerve ring and in hypodermal cells, including lateral seam cells. Also displays a punctate localization in muscle.

Its subcellular location is the cytoplasm. The protein resides in the nucleus. It carries out the reaction L-seryl-[protein] + ATP = O-phospho-L-seryl-[protein] + ADP + H(+). The enzyme catalyses L-threonyl-[protein] + ATP = O-phospho-L-threonyl-[protein] + ADP + H(+). Its function is as follows. Acts with sax-2 to restrict the growth of both primary and secondary neurites. Regulates mechanosensory tiling by controlling the termination point of sensory dendrites. The chain is Serine/threonine-protein kinase sax-1 from Caenorhabditis elegans.